The sequence spans 412 residues: Poly-beta-1,6-N-acetyl-D-glucosamine synthase (412 aa).

4 helical membrane-spanning segments follow: residues 6–26 (FLLF…IYFY), 298–318 (IISI…FITA), 332–352 (IFLL…TVAL), and 366–386 (LIFV…VVLV).

Belongs to the glycosyltransferase 2 family.

Its subcellular location is the cell membrane. Its function is as follows. N-acetylglucosaminyltransferase that catalyzes the polymerization of single monomer units of UDP-N-acetylglucosamine to produce the linear homomer poly-beta-1,6-N-acetyl-D-glucosamine (PNAG, also referred to as PIA), a biofilm adhesin polysaccharide. Requires IcaD for full activity. In Staphylococcus aureus (strain NCTC 8325 / PS 47), this protein is Poly-beta-1,6-N-acetyl-D-glucosamine synthase (icaA).